The chain runs to 178 residues: Disulfide bond formation protein B (178 aa).

Residues 1 to 16 (MTIFSSLNQFSKGHVS) lie on the Cytoplasmic side of the membrane. The chain crosses the membrane as a helical span at residues 17 to 33 (WLLLLLFIIFFEACALY). Residues 34–51 (FQHVMMLAPCVMCIYERV) lie on the Periplasmic side of the membrane. A disulfide bond links cysteine 43 and cysteine 46. Residues 52–67 (AMMGIGGAAIIGLIAP) form a helical membrane-spanning segment. Over 68–74 (NNALFRW) the chain is Cytoplasmic. A helical transmembrane segment spans residues 75-92 (LGLIGWGLSSYKGLMLAM). Over 93-147 (QHVDYQFNPSPFATCDLFVTFPSWAPLNQWVPWMFEAYGDCSKIVWQFFDLSMPQ) the chain is Periplasmic. Cysteine 107 and cysteine 133 are disulfide-bonded. A helical transmembrane segment spans residues 148-166 (WLVVIFAGNLVALALIVIA). The Cytoplasmic portion of the chain corresponds to 167–178 (QFFPVKRKNPIR).

It belongs to the DsbB family.

It is found in the cell inner membrane. Functionally, required for disulfide bond formation in some periplasmic proteins. Acts by oxidizing the DsbA protein. The polypeptide is Disulfide bond formation protein B (Vibrio parahaemolyticus serotype O3:K6 (strain RIMD 2210633)).